We begin with the raw amino-acid sequence, 173 residues long: Small ribosomal subunit protein uS5 (173 aa).

An S5 DRBM domain is found at 17-80 (WQERVIQIRR…ADGKKQLIDV (64 aa)).

This sequence belongs to the universal ribosomal protein uS5 family. As to quaternary structure, part of the 30S ribosomal subunit. Contacts proteins S4 and S8.

Functionally, with S4 and S12 plays an important role in translational accuracy. Located at the back of the 30S subunit body where it stabilizes the conformation of the head with respect to the body. This Rippkaea orientalis (strain PCC 8801 / RF-1) (Cyanothece sp. (strain PCC 8801)) protein is Small ribosomal subunit protein uS5.